The chain runs to 380 residues: Cytochrome b (380 aa).

The next 4 helical transmembrane spans lie at 33 to 53 (FGSL…FLAM), 77 to 98 (WLIR…YLHI), 113 to 133 (WNVG…GYVL), and 178 to 198 (FFAF…IHLL). Residues H83 and H97 each coordinate heme b. Heme b-binding residues include H182 and H196. H201 provides a ligand contact to a ubiquinone. The next 4 membrane-spanning stretches (helical) occupy residues 226 to 246 (YKDL…ALFS), 288 to 308 (LGGV…PILH), 320 to 340 (ITQF…WIGG), and 347 to 367 (FIII…VLTP).

It belongs to the cytochrome b family. In terms of assembly, the cytochrome bc1 complex contains 3 respiratory subunits (MT-CYB, CYC1 and UQCRFS1), 2 core proteins (UQCRC1 and UQCRC2) and probably 6 low-molecular weight proteins. The cofactor is heme b.

It is found in the mitochondrion inner membrane. Its function is as follows. Component of the ubiquinol-cytochrome c reductase complex (complex III or cytochrome b-c1 complex) that is part of the mitochondrial respiratory chain. The b-c1 complex mediates electron transfer from ubiquinol to cytochrome c. Contributes to the generation of a proton gradient across the mitochondrial membrane that is then used for ATP synthesis. In Dactyloptena peterseni (Starry flying gurnard), this protein is Cytochrome b (mt-cyb).